We begin with the raw amino-acid sequence, 203 residues long: E3 ubiquitin-protein ligase RNF152 (203 aa).

The segment at 12 to 55 (CQICFNYYSPRRRPKLLDCKHTCCSVCLQQMRTSQKDVRCPWCR) adopts an RING-type zinc-finger fold. The interval 106–165 (ISKERTLLPGDMGCRLLPGSQQKSLTVVTIPAEQQPLQGGAPQEAVEEEPDRRGVAKSST) is necessary for interaction with RRAGA. The tract at residues 140 to 159 (QPLQGGAPQEAVEEEPDRRG) is disordered. A helical membrane pass occupies residues 167 to 187 (SGVCTVILVACVLVFLLGIVL).

It belongs to the RNF152 family. Interacts with RRAGA (inactive GDP-bound form); stimulated by amino acid starvation. Interacts with SEC16A. Post-translationally, ubiquitinated. Autoubiquitinated in vitro, leading to its degradation by the proteasome.

The protein localises to the lysosome membrane. The enzyme catalyses S-ubiquitinyl-[E2 ubiquitin-conjugating enzyme]-L-cysteine + [acceptor protein]-L-lysine = [E2 ubiquitin-conjugating enzyme]-L-cysteine + N(6)-ubiquitinyl-[acceptor protein]-L-lysine.. Its pathway is protein modification; protein ubiquitination. E3 ubiquitin-protein ligase that acts as a negative regulator of mTORC1 signaling by mediating ubiquitination of RagA/RRAGA and RHEB. Catalyzes 'Lys-63'-linked polyubiquitination of RagA/RRAGA in response to amino acid starvation, thereby regulating mTORC1 signaling. Also mediates monoubiquitination of RHEB, promoting its association with the TSC-TBC complex and subsequent inhibition. Also mediates 'Lys-48'-linked polyubiquitination of target proteins and their subsequent targeting to the proteasome for degradation. Induces apoptosis when overexpressed. This is E3 ubiquitin-protein ligase RNF152 from Rattus norvegicus (Rat).